The chain runs to 510 residues: MEKRYQQLFKGKRIDFPLATGAASHVSLTYDEKKNPYLLCWTYIYQEKPEFTVPLKGCRIINNITEIGPCIHIITSNEEYQFQCRSKEEFDEMSQFFNMLGYPILGFKNVYVLNKKIGKGSFSTAYIGTNILYGNRVVVKEVDKSKVKESNVYTEIEVLRKVMHKYIIKLISAYEQEGFVYLVLEYLKGGELFEYLNNNGPYTEQVAKKAMKRVLIALEALHSNGVVHRDLKMENLMLENPNDPSSLKIIDFGLASFLNSPSMNMRCGSPGYVAPEILKCASYGTKVDIFSLGVILFNILCGYPPFRGNNVKEIFKKNMRCHISFNTKHWINKSESVKEIILWMCCKNPDDRCTALQALGHQWFLPKLTDMHMTANINELKRNEAIVHKSNDQQDMCKKCKHFNNTQNDDIYNNNNNNNQLDPNKNHKNNYNDYKNYFDTMLKIDDKYSENLIKDKTSMDSISLNKKDYDAYLVHSNEHDTVVLHGKCQTTKNSSSLLSYKCSRRSPPQN.

The region spanning Tyr111 to Phe364 is the Protein kinase domain. Residues Ile117 to Ala125 and Lys140 each bind ATP. Asp230 functions as the Proton acceptor in the catalytic mechanism. The tract at residues Asn408–Lys428 is disordered.

Belongs to the protein kinase superfamily. Ser/Thr protein kinase family.

Its subcellular location is the membrane. The enzyme catalyses L-seryl-[protein] + ATP = O-phospho-L-seryl-[protein] + ADP + H(+). It catalyses the reaction L-threonyl-[protein] + ATP = O-phospho-L-threonyl-[protein] + ADP + H(+). The polypeptide is Probable serine/threonine-protein kinase 2 (PK2) (Plasmodium falciparum (isolate K1 / Thailand)).